The primary structure comprises 413 residues: Tyrosine--tRNA ligase (413 aa).

Residues 57-66 carry the 'HIGH' region motif; it reads PTAPDIHLGH. Residues 241-245 carry the 'KMSKS' region motif; sequence KMSKS. Lys244 contacts ATP. Residues 351–412 enclose the S4 RNA-binding domain; the sequence is VWLPRLMVQA…GKRKFARLHT (62 aa).

It belongs to the class-I aminoacyl-tRNA synthetase family. TyrS type 2 subfamily. As to quaternary structure, homodimer.

Its subcellular location is the cytoplasm. The catalysed reaction is tRNA(Tyr) + L-tyrosine + ATP = L-tyrosyl-tRNA(Tyr) + AMP + diphosphate + H(+). Its function is as follows. Catalyzes the attachment of tyrosine to tRNA(Tyr) in a two-step reaction: tyrosine is first activated by ATP to form Tyr-AMP and then transferred to the acceptor end of tRNA(Tyr). This is Tyrosine--tRNA ligase from Moorella thermoacetica (strain ATCC 39073 / JCM 9320).